The primary structure comprises 157 residues: Protein Smg (157 aa).

Belongs to the Smg family.

The polypeptide is Protein Smg (Sodalis glossinidius (strain morsitans)).